We begin with the raw amino-acid sequence, 192 residues long: EF-hand protein 5 (192 aa).

Residues methionine 1–tyrosine 36 are disordered. EF-hand domains lie at alanine 46–leucine 80, serine 81–aspartate 118, threonine 119–cysteine 154, and serine 155–asparagine 190. 5 residues coordinate Ca(2+): threonine 100, glutamate 102, aspartate 107, aspartate 132, and threonine 136.

The sequence is that of EF-hand protein 5 from Trypanosoma brucei brucei.